A 25-amino-acid chain; its full sequence is Aggression-stimulating peptide (25 aa).

In terms of tissue distribution, expressed by the skin glands of male frogs.

Its subcellular location is the secreted. Its function is as follows. Stimulates aggressive behavior in male frogs. No effect on female frogs. The protein is Aggression-stimulating peptide of Leptodactylus fallax (Mountain chicken frog).